A 165-amino-acid chain; its full sequence is Crossover junction endodeoxyribonuclease RuvC (165 aa).

Residues Asp7, Glu67, and Asp140 contribute to the active site. The Mg(2+) site is built by Asp7, Glu67, and Asp140.

This sequence belongs to the RuvC family. In terms of assembly, homodimer which binds Holliday junction (HJ) DNA. The HJ becomes 2-fold symmetrical on binding to RuvC with unstacked arms; it has a different conformation from HJ DNA in complex with RuvA. In the full resolvosome a probable DNA-RuvA(4)-RuvB(12)-RuvC(2) complex forms which resolves the HJ. Mg(2+) is required as a cofactor.

Its subcellular location is the cytoplasm. The catalysed reaction is Endonucleolytic cleavage at a junction such as a reciprocal single-stranded crossover between two homologous DNA duplexes (Holliday junction).. Functionally, the RuvA-RuvB-RuvC complex processes Holliday junction (HJ) DNA during genetic recombination and DNA repair. Endonuclease that resolves HJ intermediates. Cleaves cruciform DNA by making single-stranded nicks across the HJ at symmetrical positions within the homologous arms, yielding a 5'-phosphate and a 3'-hydroxyl group; requires a central core of homology in the junction. The consensus cleavage sequence is 5'-(A/T)TT(C/G)-3'. Cleavage occurs on the 3'-side of the TT dinucleotide at the point of strand exchange. HJ branch migration catalyzed by RuvA-RuvB allows RuvC to scan DNA until it finds its consensus sequence, where it cleaves and resolves the cruciform DNA. This chain is Crossover junction endodeoxyribonuclease RuvC, found in Halothermothrix orenii (strain H 168 / OCM 544 / DSM 9562).